Reading from the N-terminus, the 273-residue chain is MKAFNTSWADEVEADYVDGLPPSNEYIEGDYKYVTEYKFNDDGKKVKVVRTFKIEKQIVPKAVARRRSWVKFGDSLLDKPGPNSQTTMASEEIFMQFIGSKEFDQTHETQLDPGKNIAKCRICNGEHWSVNCPYKGTSMDSKTMMETKANAAAAAAVSDPSKMGKYVPPFMKDGGGGSGGKNWGRGRDRDDSSAVRISNLSESMTEADLEELVKKIGPHTKMYLAREKNTGLCKGFAYVHFKFRQDAAAAIEVLNGHGYDHLILCVEWSKPQP.

Positions 168-192 are disordered; it reads PPFMKDGGGGSGGKNWGRGRDRDDS. The span at 173–183 shows a compositional bias: gly residues; the sequence is DGGGGSGGKNW. Residues 193–271 form the RRM domain; the sequence is SAVRISNLSE…LILCVEWSKP (79 aa).

It belongs to the eIF-3 subunit G family. In terms of assembly, component of the eukaryotic translation initiation factor 3 (eIF-3) complex. The eIF-3 complex interacts with pix.

Its subcellular location is the cytoplasm. Functionally, RNA-binding component of the eukaryotic translation initiation factor 3 (eIF-3) complex, which is involved in protein synthesis of a specialized repertoire of mRNAs and, together with other initiation factors, stimulates binding of mRNA and methionyl-tRNAi to the 40S ribosome. The eIF-3 complex specifically targets and initiates translation of a subset of mRNAs involved in cell proliferation. This subunit can bind 18S rRNA. In Drosophila erecta (Fruit fly), this protein is Eukaryotic translation initiation factor 3 subunit G-2.